Here is a 1263-residue protein sequence, read N- to C-terminus: DNA-directed RNA polymerase subunit beta (1263 aa).

The protein belongs to the RNA polymerase beta chain family. As to quaternary structure, the RNAP catalytic core consists of 2 alpha, 1 beta, 1 beta' and 1 omega subunit. When a sigma factor is associated with the core the holoenzyme is formed, which can initiate transcription.

It carries out the reaction RNA(n) + a ribonucleoside 5'-triphosphate = RNA(n+1) + diphosphate. Its function is as follows. DNA-dependent RNA polymerase catalyzes the transcription of DNA into RNA using the four ribonucleoside triphosphates as substrates. The polypeptide is DNA-directed RNA polymerase subunit beta (Thermotoga sp. (strain RQ2)).